A 744-amino-acid polypeptide reads, in one-letter code: CCR4-NOT transcription complex subunit 10 (744 aa).

Residues 1-16 (MAADKPADQGAEKHEG) show a composition bias toward basic and acidic residues. The segment at 1–25 (MAADKPADQGAEKHEGTGQSSGITD) is disordered. Alanine 2 is modified (N-acetylalanine). The stretch at 74–107 (KSNQTTTDNLRQTLNQLKNQVHSAVEEMDGLDDV) forms a coiled coil. The span at 183–199 (NNNKNGKNETGNNNNKD) shows a compositional bias: low complexity. Disordered regions lie at residues 183–204 (NNNK…SNHK), 477–521 (QDPK…PPSS), and 602–634 (VSLG…PQCY). A compositionally biased stretch (polar residues) spans 484–495 (GAKNSNQLGGNT). Residues 496 to 506 (ESSESSETCSS) show a composition bias toward low complexity. A compositionally biased stretch (polar residues) spans 602 to 612 (VSLGISSNEQD).

It belongs to the CNOT10 family. In terms of assembly, component of the CCR4-NOT complex; distinct complexes seem to exist that differ in the participation of probably mutually exclusive catalytic subunits. CNOT10 and CNOT11 form a subcomplex docked to the CNOT1 scaffold.

The protein resides in the cytoplasm. It localises to the nucleus. In terms of biological role, component of the CCR4-NOT complex which is one of the major cellular mRNA deadenylases and is linked to various cellular processes including bulk mRNA degradation, miRNA-mediated repression, translational repression during translational initiation and general transcription regulation. Additional complex functions may be a consequence of its influence on mRNA expression. Is not required for association of CNOT7 to the CCR4-NOT complex. The sequence is that of CCR4-NOT transcription complex subunit 10 (CNOT10) from Homo sapiens (Human).